The chain runs to 116 residues: Ribosome-binding factor A (116 aa).

It belongs to the RbfA family. In terms of assembly, monomer. Binds 30S ribosomal subunits, but not 50S ribosomal subunits or 70S ribosomes.

Its subcellular location is the cytoplasm. Its function is as follows. One of several proteins that assist in the late maturation steps of the functional core of the 30S ribosomal subunit. Associates with free 30S ribosomal subunits (but not with 30S subunits that are part of 70S ribosomes or polysomes). Required for efficient processing of 16S rRNA. May interact with the 5'-terminal helix region of 16S rRNA. The sequence is that of Ribosome-binding factor A from Halalkalibacterium halodurans (strain ATCC BAA-125 / DSM 18197 / FERM 7344 / JCM 9153 / C-125) (Bacillus halodurans).